The following is a 65-amino-acid chain: DNA gyrase inhibitor YacG (65 aa).

Residues Cys9, Cys12, Cys28, and Cys32 each contribute to the Zn(2+) site. Residues 44–65 (EKRIPSSSDLSESDDWSEEPKQ) form a disordered region. The span at 54–65 (SESDDWSEEPKQ) shows a compositional bias: acidic residues.

The protein belongs to the DNA gyrase inhibitor YacG family. Interacts with GyrB. Zn(2+) is required as a cofactor.

Its function is as follows. Inhibits all the catalytic activities of DNA gyrase by preventing its interaction with DNA. Acts by binding directly to the C-terminal domain of GyrB, which probably disrupts DNA binding by the gyrase. This chain is DNA gyrase inhibitor YacG, found in Escherichia coli O6:H1 (strain CFT073 / ATCC 700928 / UPEC).